A 154-amino-acid polypeptide reads, in one-letter code: CASP-like protein 5B2 (154 aa).

Over 1-17 the chain is Cytoplasmic; the sequence is MAGLAGRPGSWGGLVLR. A helical transmembrane segment spans residues 18-38; that stretch reads VGQALFAAACIGVMGSSLGFA. Over 39–42 the chain is Extracellular; the sequence is SYTA. A helical transmembrane segment spans residues 43–63; sequence FCYLIASMGLQMLWSFGLACL. Topologically, residues 64–87 are cytoplasmic; that stretch reads DGYAIRANKDLTSPILLSLFVVGD. The helical transmembrane segment at 88–107 threads the bilayer; that stretch reads WVTAILSFAASSSAAGVVIL. Over 108 to 130 the chain is Extracellular; the sequence is FQKDVLFCRRYPQLPCGKYELAT. Residues 131 to 151 form a helical membrane-spanning segment; the sequence is AFAFLSWALSATSALIMFWLL. At 152–154 the chain is on the cytoplasmic side; sequence AAF.

Belongs to the Casparian strip membrane proteins (CASP) family. Homodimer and heterodimers.

The protein localises to the cell membrane. The polypeptide is CASP-like protein 5B2 (Zea mays (Maize)).